Reading from the N-terminus, the 165-residue chain is MYVEMIDETGQVSEDIKKQTLDLLEFAAQKTGKENKEMAVTFVTNERSHELNLEYRDTDRPTDVISLEYKPEVDISFDEEDLAENPELAEMLEDFDSYIGELFISIDKAKEQAEEYGHSYEREMGFLAVHGFLHINGYDHYTPEEEKEMFSLQEEILTAYGLKRQ.

Residues histidine 130, histidine 134, and histidine 140 each coordinate Zn(2+).

The protein belongs to the endoribonuclease YbeY family. Requires Zn(2+) as cofactor.

It is found in the cytoplasm. Its function is as follows. Single strand-specific metallo-endoribonuclease involved in late-stage 70S ribosome quality control and in maturation of the 3' terminus of the 16S rRNA. This Streptococcus agalactiae serotype Ia (strain ATCC 27591 / A909 / CDC SS700) protein is Endoribonuclease YbeY.